Reading from the N-terminus, the 514-residue chain is 2-isopropylmalate synthase (514 aa).

The 264-residue stretch at 5-268 (LIIFDTTLRD…DVGIDTTQIV (264 aa)) folds into the Pyruvate carboxyltransferase domain. Aspartate 14, histidine 202, histidine 204, and asparagine 239 together coordinate Mn(2+). The tract at residues 395-514 (KFVSLSQHSE…KDDKLNPQRS (120 aa)) is regulatory domain.

Belongs to the alpha-IPM synthase/homocitrate synthase family. LeuA type 1 subfamily. In terms of assembly, homodimer. It depends on Mn(2+) as a cofactor.

Its subcellular location is the cytoplasm. The catalysed reaction is 3-methyl-2-oxobutanoate + acetyl-CoA + H2O = (2S)-2-isopropylmalate + CoA + H(+). The protein operates within amino-acid biosynthesis; L-leucine biosynthesis; L-leucine from 3-methyl-2-oxobutanoate: step 1/4. Its function is as follows. Catalyzes the condensation of the acetyl group of acetyl-CoA with 3-methyl-2-oxobutanoate (2-ketoisovalerate) to form 3-carboxy-3-hydroxy-4-methylpentanoate (2-isopropylmalate). This is 2-isopropylmalate synthase from Burkholderia multivorans (strain ATCC 17616 / 249).